Reading from the N-terminus, the 727-residue chain is Centrosomal protein kizuna (727 aa).

A disordered region spans residues 1 to 20; the sequence is MTERSGRGGGTRGASALPSP. Residues 77 to 124 adopt a coiled-coil conformation; sequence KNARIRNQEYLKQFERIQANITASLEKLQELKIEFETQIKKMQLLSKD. Disordered stretches follow at residues 176 to 226, 271 to 456, and 564 to 727; these read DFTT…NKSD, EGKK…FTNL, and RLAV…PRTP. The segment covering 198–223 has biased composition (polar residues); the sequence is HQQTAQSSDVTGSRVVQTPGDTQCLN. Basic and acidic residues predominate over residues 286 to 324; that stretch reads LSPENRTTDLKCDSSRRSEGSEGEILTREHIEVEEERAR. Ser328 carries the phosphoserine modification. Positions 343–359 are enriched in basic and acidic residues; that stretch reads PQEKPPARKASSDHLPC. Residues 380–390 show a composition bias toward low complexity; the sequence is LSSSSDLTVSV. Thr387 bears the Phosphothreonine; by PLK1 mark. A compositionally biased stretch (polar residues) spans 442 to 455; sequence APSTPDSPNESFTN. The segment covering 569-583 has biased composition (low complexity); that stretch reads SSKSSCSLPSTPSDE. The span at 603–613 shows a compositional bias: acidic residues; it reads QEDESREESTE. The span at 631–642 shows a compositional bias: polar residues; it reads LKQSALQGSTHQ. 2 stretches are compositionally biased toward low complexity: residues 659 to 669 and 677 to 689; these read GLKTGSGTFKT and SEASFSSSEGSPL. Ser711, Ser714, and Ser716 each carry phosphoserine.

It belongs to the kizuna family. In terms of assembly, interacts with AKAP9, CEP72, ODF2, PCNT and TUBGCP2. Phosphorylation at Thr-387 by PLK1 is not needed for centrosomal localization or pericentriolar material expansion but is indispensable for spindle-pole stabilization.

It localises to the cytoplasm. The protein resides in the cytoskeleton. It is found in the microtubule organizing center. Its subcellular location is the centrosome. The protein localises to the cilium basal body. Its function is as follows. Centrosomal protein required for establishing a robust mitotic centrosome architecture that can endure the forces that converge on the centrosomes during spindle formation. Required for stabilizing the expanded pericentriolar material around the centriole. This Bos taurus (Bovine) protein is Centrosomal protein kizuna (KIZ).